The sequence spans 747 residues: MSKIESALQAAQPGLSRLRGGAGGMGYRAATTQAEQPRSSLLDTIGRFAKAGADMYTAKEQRARDLADERSNEIIRKLTPEQRREALNNGTLLYQDDPYAMEALRVKTGRNAAYLVDDDVMQKIKEGVFRTREEMEEYRHSRLQEGAKVYAEQFGIDPEDVDYQRGFNGDITERNISLYGAHDNFLSQQAQKGAIMNSRVELNGVLQDPDMLRRPDSADFFEKYIDNGLVTGAIPSDAQATQLISQAFSDASSRAGGADFLMRVGDKKVTLNGATTTYRELIGEEQWNALMVTAQRSQFETDAKLNEQYRLKINSALNQEDPRTAWEMLQGIKAELDKVQPDEQMTPQREWLISAQEQVQNQMNAWTKAQAKALDDSMKSMNKLDVIDKQFQKRINGEWVSTDFKDMPVNENTGEFKHSDMVNYANKKLAEIDSMDIPDGAKDAMKLKYLQADSKDGAFRTAIGTMVTDAGQEWSAAVINGKLPERTPAMDALRRIRNADPQLIAALYPDQAELFLTMDMMDKQGIDPQVILDADRLTVKRSKEQRFEDDKAFESALNASKAPEIARMPASLRESARKIYDSVKYRSGNESMAMEQMTKFLKESTYTFTGDDVDGDTVGVIPKNMMQVNSDPKSWEQGRDILEEARKGIIASNPWITNKQLTMYSQGDSIYLMDTTGQVRVRYDKELLSKVWSENQKKLEEKAREKALADVNKRAPIVAATKAREAAAKRVREKRKQTPKFIYGRKE.

The protein belongs to the T7virus internal virion protein gp15 family. Homooctamer. Interacts with gp16; after ejection the gp15-gp16 complex composed of a gp15 octamer and a gp16 tetramer probably binds both the viral DNA and the host inner membrane. Interacts with gp14.

It localises to the virion. Its subcellular location is the host periplasm. Component of the cylindrical core that assembles on the inner surface of the capsid during capsid formation and plays a role in viral DNA ejection into the host cell. The inner core is composed of stacked rings of gp14, gp15 and gp16 proteins. Following binding to the host cell surface, the internal core is disassembled and gp15 is ejected along with gp14 and gp16 into the infected cell. Gp15 probably remains associated with gp16. The gp15-gp16 complex binds to both the viral DNA and the host inner membrane, probably escorting the leading end of the genome through the periplasm and controlling the extend of DNA translocated into the host cell. This chain is Internal virion protein gp15, found in Escherichia phage T7 (Bacteriophage T7).